Here is a 170-residue protein sequence, read N- to C-terminus: Phosphopantetheine adenylyltransferase (170 aa).

Threonine 10 contacts substrate. Residues 10-11 (TF) and histidine 18 contribute to the ATP site. Positions 42, 75, and 89 each coordinate substrate. Residues 90 to 92 (GVR), glutamate 100, and 125 to 131 (YTYVASS) contribute to the ATP site.

Belongs to the bacterial CoaD family. In terms of assembly, homohexamer. It depends on Mg(2+) as a cofactor.

It is found in the cytoplasm. It carries out the reaction (R)-4'-phosphopantetheine + ATP + H(+) = 3'-dephospho-CoA + diphosphate. The protein operates within cofactor biosynthesis; coenzyme A biosynthesis; CoA from (R)-pantothenate: step 4/5. Functionally, reversibly transfers an adenylyl group from ATP to 4'-phosphopantetheine, yielding dephospho-CoA (dPCoA) and pyrophosphate. The polypeptide is Phosphopantetheine adenylyltransferase (Chlorobium limicola (strain DSM 245 / NBRC 103803 / 6330)).